A 343-amino-acid chain; its full sequence is Putative trace amine-associated receptor 3 (343 aa).

Residues 1–35 (MDLTYIPEDLSSCPKFVNKILSSHQPLFSCPGDNV) are Extracellular-facing. The chain crosses the membrane as a helical span at residues 36-56 (FGYDWSHDYPLFGNLVIMVSI). The Cytoplasmic portion of the chain corresponds to 57–68 (SHFKQLHSPTNF). A helical transmembrane segment spans residues 69–89 (LILSMATTDFLLGFVIMPYSI). Residues 90-150 (MRSVESCWYF…TKMTNSTIKQ (61 aa)) lie on the Extracellular side of the membrane. An intrachain disulfide couples Cys104 to Cys189. A glycan (N-linked (GlcNAc...) asparagine) is linked at Asn145. A helical transmembrane segment spans residues 151–168 (LLAFCWSVPALFSFGLVL). Over 169–172 (SEAD) the chain is Cytoplasmic. Residues 173–186 (VSGMQSYKILVACF) form an extracellular Loop 2 (ECL2) region. Residues 173-193 (VSGMQSYKILVACFNFCALTF) form a helical membrane-spanning segment. Residues 194–198 (NKFWG) lie on the Extracellular side of the membrane. Residues 199–223 (TILFTTCFFTPGSIMVGIYGKIFIV) traverse the membrane as a helical segment. Over 224–257 (SKQHARVISHVPENTKGAVKKHLSKKKDRKAAKT) the chain is Cytoplasmic. A helical membrane pass occupies residues 258–278 (LGIVMGVFLACWLPCFLAVLI). Over 279–287 (DPYLDYSTP) the chain is Extracellular. Residues 288-308 (ILILDLLVWLRYFNSTCNPLI) traverse the membrane as a helical segment. Topologically, residues 309–343 (HGFFNPWFQKAFKYIVSGKIFSSHSETANLFPEAH) are cytoplasmic.

This sequence belongs to the G-protein coupled receptor 1 family. In terms of tissue distribution, not expressed in the pons, thalamus, globus pallidus, caudate, putamen or cerebellum.

Its subcellular location is the cell membrane. In terms of biological role, putative olfactory receptor activated by several primary trace amines. This chain is Putative trace amine-associated receptor 3, found in Homo sapiens (Human).